We begin with the raw amino-acid sequence, 96 residues long: Co-chaperonin GroES (96 aa).

This sequence belongs to the GroES chaperonin family. Heptamer of 7 subunits arranged in a ring. Interacts with the chaperonin GroEL.

It is found in the cytoplasm. Together with the chaperonin GroEL, plays an essential role in assisting protein folding. The GroEL-GroES system forms a nano-cage that allows encapsulation of the non-native substrate proteins and provides a physical environment optimized to promote and accelerate protein folding. GroES binds to the apical surface of the GroEL ring, thereby capping the opening of the GroEL channel. This is Co-chaperonin GroES from Allochromatium vinosum (Chromatium vinosum).